The primary structure comprises 443 residues: Threonine/serine transporter TdcC (443 aa).

Helical transmembrane passes span 22–42 (TTWTLGLFGTAIGAGVLFFPI), 44–64 (AGFGGLIPILLMLVLAYPIAF), 97–117 (GVVITFLYFFAICPLLWIYGV), 140–160 (FVALFLLLLMAFVIWFGKDLM), 163–183 (VMSYLVWPFIASLVLISLSLI), 207–227 (ILVTVWLGISIMVFSFNFSPI), 259–279 (ASMLMVAVVMFFAFSCLFTLS), 319–339 (ASIIALVAIFKSFFGHYLGTL), 366–386 (ISMIFIMGSTWVVAYANPNIL), 389–409 (IEAMGAPIIASLLCLLPMYAI), and 423–443 (DNVFVTLIGLLTILNIVYKLF).

It belongs to the amino acid/polyamine transporter 2 family. SdaC/TdcC subfamily.

It is found in the cell inner membrane. It catalyses the reaction L-threonine(in) + H(+)(in) = L-threonine(out) + H(+)(out). It carries out the reaction L-serine(in) + H(+)(in) = L-serine(out) + H(+)(out). Functionally, involved in the import of threonine and serine into the cell, with the concomitant import of a proton (symport system). The sequence is that of Threonine/serine transporter TdcC from Salmonella paratyphi B (strain ATCC BAA-1250 / SPB7).